The sequence spans 357 residues: uncharacterized protein (357 aa).

This is an uncharacterized protein from Mycobacterium bovis (strain ATCC BAA-935 / AF2122/97).